Here is a 568-residue protein sequence, read N- to C-terminus: Protein OCTOPUS-like (568 aa).

7 disordered regions span residues 1–27 (MNLSADQAPVTAVDELAPPSQPHRLST), 78–99 (LFKPSSSGTNNSNGNGRVRPGF), 168–203 (EEAEIEEDEENGEKDPGEIVEEKSSEIGEEEEELKP), 242–276 (QKQKVKKPRNGVGGGRPQSEIGVGRRSSDTDPRFS), 360–428 (PGGS…DKKS), 446–512 (DDEE…SKDG), and 526–558 (RSWKTSGGSGGGGGGGGGGGWEKTAAKANSHGH). Positions 82–93 (SSSGTNNSNGNG) are enriched in low complexity. Residues 168-179 (EEAEIEEDEENG) are compositionally biased toward acidic residues. Basic and acidic residues predominate over residues 180–193 (EKDPGEIVEEKSSE). Ser260 carries the post-translational modification Phosphoserine. Residues 400–423 (SVSNSTTTIDSNSMETAENKGNQN) are compositionally biased toward polar residues. The span at 532–546 (GGSGGGGGGGGGGGW) shows a compositional bias: gly residues.

This sequence belongs to the OCTOPUS family. Post-translationally, phosphorylation at Ser-260 amplifies the promotion of protophloem differentiation.

It is found in the cell membrane. Its subcellular location is the cytoplasm. Potentiates primary root protophloem differentiation. Regulates roots architecture. This Arabidopsis thaliana (Mouse-ear cress) protein is Protein OCTOPUS-like.